Here is a 171-residue protein sequence, read N- to C-terminus: 3-hydroxydecanoyl-[acyl-carrier-protein] dehydratase (171 aa).

His-70 is a catalytic residue.

Belongs to the thioester dehydratase family. FabA subfamily. In terms of assembly, homodimer.

It is found in the cytoplasm. It carries out the reaction a (3R)-hydroxyacyl-[ACP] = a (2E)-enoyl-[ACP] + H2O. It catalyses the reaction (3R)-hydroxydecanoyl-[ACP] = (2E)-decenoyl-[ACP] + H2O. The enzyme catalyses (2E)-decenoyl-[ACP] = (3Z)-decenoyl-[ACP]. The protein operates within lipid metabolism; fatty acid biosynthesis. Its function is as follows. Necessary for the introduction of cis unsaturation into fatty acids. Catalyzes the dehydration of (3R)-3-hydroxydecanoyl-ACP to E-(2)-decenoyl-ACP and then its isomerization to Z-(3)-decenoyl-ACP. Can catalyze the dehydratase reaction for beta-hydroxyacyl-ACPs with saturated chain lengths up to 16:0, being most active on intermediate chain length. The protein is 3-hydroxydecanoyl-[acyl-carrier-protein] dehydratase of Shewanella putrefaciens (strain CN-32 / ATCC BAA-453).